The primary structure comprises 586 residues: Phosphomethylpyrimidine synthase (586 aa).

A disordered region spans residues 1-58 (MKQSVSAEQIELKSSLPGSKKVYVDGPREGMKVPMREIEQSDTNGVPNPPIRVYDTSG). Residues 22 to 39 (VYVDGPREGMKVPMREIE) show a composition bias toward basic and acidic residues. Substrate-binding positions include Asn-193, Met-222, Tyr-251, His-287, 307-309 (SRG), 348-351 (DGLR), and Glu-387. A Zn(2+)-binding site is contributed by His-391. Tyr-414 contacts substrate. His-455 contributes to the Zn(2+) binding site. Positions 535, 538, and 543 each coordinate [4Fe-4S] cluster.

Belongs to the ThiC family. [4Fe-4S] cluster is required as a cofactor.

It carries out the reaction 5-amino-1-(5-phospho-beta-D-ribosyl)imidazole + S-adenosyl-L-methionine = 4-amino-2-methyl-5-(phosphooxymethyl)pyrimidine + CO + 5'-deoxyadenosine + formate + L-methionine + 3 H(+). Its pathway is cofactor biosynthesis; thiamine diphosphate biosynthesis. Catalyzes the synthesis of the hydroxymethylpyrimidine phosphate (HMP-P) moiety of thiamine from aminoimidazole ribotide (AIR) in a radical S-adenosyl-L-methionine (SAM)-dependent reaction. In Bacillus anthracis (strain A0248), this protein is Phosphomethylpyrimidine synthase.